The sequence spans 414 residues: DNA primase small subunit PriS (414 aa).

Residues aspartate 98, aspartate 100, and aspartate 312 contribute to the active site.

Belongs to the eukaryotic-type primase small subunit family. As to quaternary structure, heterodimer of a small subunit (PriS) and a large subunit (PriL). The cofactor is Mg(2+). It depends on Mn(2+) as a cofactor.

Functionally, catalytic subunit of DNA primase, an RNA polymerase that catalyzes the synthesis of short RNA molecules used as primers for DNA polymerase during DNA replication. The small subunit contains the primase catalytic core and has DNA synthesis activity on its own. Binding to the large subunit stabilizes and modulates the activity, increasing the rate of DNA synthesis while decreasing the length of the DNA fragments, and conferring RNA synthesis capability. The DNA polymerase activity may enable DNA primase to also catalyze primer extension after primer synthesis. May also play a role in DNA repair. This Methanosarcina acetivorans (strain ATCC 35395 / DSM 2834 / JCM 12185 / C2A) protein is DNA primase small subunit PriS.